The following is a 342-amino-acid chain: Glycerol-3-phosphate dehydrogenase [NAD(P)+] (342 aa).

NADPH is bound by residues Trp11, Arg33, and Lys112. Positions 112, 147, and 149 each coordinate sn-glycerol 3-phosphate. Position 151 (Ala151) interacts with NADPH. Residues Lys202, Asp255, Ser265, Arg266, and Asn267 each coordinate sn-glycerol 3-phosphate. Lys202 acts as the Proton acceptor in catalysis. Arg266 serves as a coordination point for NADPH. NADPH is bound by residues Val290 and Glu292.

The protein belongs to the NAD-dependent glycerol-3-phosphate dehydrogenase family.

The protein localises to the cytoplasm. The catalysed reaction is sn-glycerol 3-phosphate + NAD(+) = dihydroxyacetone phosphate + NADH + H(+). It carries out the reaction sn-glycerol 3-phosphate + NADP(+) = dihydroxyacetone phosphate + NADPH + H(+). It functions in the pathway membrane lipid metabolism; glycerophospholipid metabolism. In terms of biological role, catalyzes the reduction of the glycolytic intermediate dihydroxyacetone phosphate (DHAP) to sn-glycerol 3-phosphate (G3P), the key precursor for phospholipid synthesis. The protein is Glycerol-3-phosphate dehydrogenase [NAD(P)+] of Cupriavidus metallidurans (strain ATCC 43123 / DSM 2839 / NBRC 102507 / CH34) (Ralstonia metallidurans).